Consider the following 320-residue polypeptide: Acetyl-coenzyme A carboxylase carboxyl transferase subunit alpha (320 aa).

One can recognise a CoA carboxyltransferase C-terminal domain in the interval 33–294 (AFDGEIESLR…GDAVEEELKA (262 aa)).

Belongs to the AccA family. Acetyl-CoA carboxylase is a heterohexamer composed of biotin carboxyl carrier protein (AccB), biotin carboxylase (AccC) and two subunits each of ACCase subunit alpha (AccA) and ACCase subunit beta (AccD).

It localises to the cytoplasm. It carries out the reaction N(6)-carboxybiotinyl-L-lysyl-[protein] + acetyl-CoA = N(6)-biotinyl-L-lysyl-[protein] + malonyl-CoA. Its pathway is lipid metabolism; malonyl-CoA biosynthesis; malonyl-CoA from acetyl-CoA: step 1/1. Functionally, component of the acetyl coenzyme A carboxylase (ACC) complex. First, biotin carboxylase catalyzes the carboxylation of biotin on its carrier protein (BCCP) and then the CO(2) group is transferred by the carboxyltransferase to acetyl-CoA to form malonyl-CoA. The protein is Acetyl-coenzyme A carboxylase carboxyl transferase subunit alpha of Phenylobacterium zucineum (strain HLK1).